Reading from the N-terminus, the 150-residue chain is UPF0756 membrane protein ABSDF1616 (150 aa).

4 helical membrane passes run 1 to 21 (MLAQFDVNLVVLLVLLICGLL), 45 to 65 (FFPYIQAHGLNLGILILTIGV), 83 to 103 (FISFKSLVAIAIGLLVAWLGG), and 115 to 135 (VVAGLLIGTVAGVALLRGVPV).

It belongs to the UPF0756 family.

The protein resides in the cell membrane. In Acinetobacter baumannii (strain SDF), this protein is UPF0756 membrane protein ABSDF1616.